A 189-amino-acid chain; its full sequence is Interferon alpha-1/13 (189 aa).

Residues 1-23 (MASPFALLMVLVVLSCKSSCSLG) form the signal peptide. Disulfide bonds link C24-C122 and C52-C162.

Belongs to the alpha/beta interferon family. As to quaternary structure, interacts with CR2.

It localises to the secreted. Its function is as follows. Produced by macrophages, IFN-alpha have antiviral activities. Interferon stimulates the production of two enzymes: a protein kinase and an oligoadenylate synthetase. This Homo sapiens (Human) protein is Interferon alpha-1/13 (IFNA1).